We begin with the raw amino-acid sequence, 30 residues long: Bowman-Birk type proteinase inhibitor 3 (30 aa).

Cystine bridges form between cysteine 9–cysteine 24 and cysteine 14–cysteine 22.

Inhibits trypsin (IC(50)=4.90 nM) and, to a lesser extent, alpha-chymotrypsin (IC(50)=1.87 uM). The polypeptide is Bowman-Birk type proteinase inhibitor 3 (Lathyrus sativus (White vetchling)).